A 509-amino-acid polypeptide reads, in one-letter code: tRNA-2-methylthio-N(6)-dimethylallyladenosine synthase (509 aa).

The segment covering 1 to 15 (MNEQQRLASRQANSS) has biased composition (polar residues). Residues 1–25 (MNEQQRLASRQANSSTKKEEKDYSK) form a disordered region. Positions 16–25 (TKKEEKDYSK) are enriched in basic and acidic residues. Residues 66 to 184 (RKFYIRTYGC…LPYILKDAMF (119 aa)) enclose the MTTase N-terminal domain. Residues C75, C111, C145, C221, C225, and C228 each contribute to the [4Fe-4S] cluster site. Positions 207-437 (RRGDIKAWVN…NTLVNEYGVN (231 aa)) constitute a Radical SAM core domain. A TRAM domain is found at 440 to 503 (KRYIGQIVEV…TWSLNGELVK (64 aa)).

It belongs to the methylthiotransferase family. MiaB subfamily. Monomer. Requires [4Fe-4S] cluster as cofactor.

The protein resides in the cytoplasm. It catalyses the reaction N(6)-dimethylallyladenosine(37) in tRNA + (sulfur carrier)-SH + AH2 + 2 S-adenosyl-L-methionine = 2-methylsulfanyl-N(6)-dimethylallyladenosine(37) in tRNA + (sulfur carrier)-H + 5'-deoxyadenosine + L-methionine + A + S-adenosyl-L-homocysteine + 2 H(+). In terms of biological role, catalyzes the methylthiolation of N6-(dimethylallyl)adenosine (i(6)A), leading to the formation of 2-methylthio-N6-(dimethylallyl)adenosine (ms(2)i(6)A) at position 37 in tRNAs that read codons beginning with uridine. In Bacillus mycoides (strain KBAB4) (Bacillus weihenstephanensis), this protein is tRNA-2-methylthio-N(6)-dimethylallyladenosine synthase.